A 208-amino-acid chain; its full sequence is Small ribosomal subunit protein eS1 (208 aa).

It belongs to the eukaryotic ribosomal protein eS1 family.

This Saccharolobus solfataricus (strain ATCC 35092 / DSM 1617 / JCM 11322 / P2) (Sulfolobus solfataricus) protein is Small ribosomal subunit protein eS1.